The chain runs to 77 residues: Neurotoxin LmNaTx21.1 (77 aa).

An N-terminal signal peptide occupies residues 1–7 (LILVACL). Residues 16 to 76 (KDGYPVDWNN…VEIKGYGRCR (61 aa)) enclose the LCN-type CS-alpha/beta domain. Cystine bridges form between Cys26–Cys75, Cys30–Cys51, Cys37–Cys58, and Cys41–Cys60.

The protein belongs to the long (4 C-C) scorpion toxin superfamily. Sodium channel inhibitor family. Alpha subfamily. In terms of tissue distribution, expressed by the venom gland.

It is found in the secreted. Binds voltage-independently at site-3 of voltage-gated sodium channels (Nav) and inhibits the inactivation of the activated channels, thereby blocking neuronal transmission. The chain is Neurotoxin LmNaTx21.1 from Lychas mucronatus (Chinese swimming scorpion).